The chain runs to 78 residues: Translation initiation factor IF-1, chloroplastic (78 aa).

The S1-like domain maps to 1-72 (MKKQKLIDME…TKGRITYRFH (72 aa)).

The protein belongs to the IF-1 family. Component of the 30S ribosomal translation pre-initiation complex which assembles on the 30S ribosome in the order IF-2 and IF-3, IF-1 and N-formylmethionyl-tRNA(fMet); mRNA recruitment can occur at any time during PIC assembly.

The protein resides in the plastid. The protein localises to the chloroplast. In terms of biological role, one of the essential components for the initiation of protein synthesis. Stabilizes the binding of IF-2 and IF-3 on the 30S subunit to which N-formylmethionyl-tRNA(fMet) subsequently binds. Helps modulate mRNA selection, yielding the 30S pre-initiation complex (PIC). Upon addition of the 50S ribosomal subunit IF-1, IF-2 and IF-3 are released leaving the mature 70S translation initiation complex. The polypeptide is Translation initiation factor IF-1, chloroplastic (Huperzia lucidula (Shining clubmoss)).